Reading from the N-terminus, the 677-residue chain is MDDMMRAMDCLNMAATLRNAALASATCTGRTLGEDREPIWVEGSRKTPEPPLPEESPAPEPNNEIPLLPKIDFEPNISCFPDLQAINASIVRRELEEEGKRCVRQQLKAIRDKQDAMRLSRETQQRKEERQRDQLQQKALRERNESLLIQKADQMTAAQLEAQQREQLALRQQIDQKLHKLALEGVSRCQRRFNQKYEGIAKILLSLNPETVKVCAAQNTQLKELGQKFEQLVSSVKMGNCEMQSQFLCSIIKAEEFCKSLDALELDIIKQLAEFSEQIQQQLKMEAAKKLEDERQRQQQQEEERQKLEEQQKLEEQEKLRKEKEESAAKEKQQEAETAKADAANVPAPLEPKSQDVPPAATATSTSVHPDRLKFYNDILALYQSKVDAVKPLQTEESLKQYRTGCQRAINLPLNAISAVSPQHLAQNFDKLYSFFAGQPTKVMNGTITINDHPLARDYCMLLMAKKFVSQTETAICSNPQAAFPFASVIITFWKLLPDFGKVFLAYMYKESPFLVPYVIPQQQGQTPEQYLKTIGYRLTDKNELEKPDIYLKRQTGLARLYAAVIISQGRKAAGPDECFELNEGWLWLAHMVHVKPLPDISATLIMEILQTLGFELWRTYGKQFVKLLVYIQNIYMPQLAAYDEGGPKTRLEMLLAKFLRERQIAQAVGVLPPGFW.

Residues 34-48 (EDREPIWVEGSRKTP) are compositionally biased toward basic and acidic residues. Disordered regions lie at residues 34–65 (EDREPIWVEGSRKTPEPPLPEESPAPEPNNEI), 113–136 (KQDAMRLSRETQQRKEERQRDQLQ), and 294–366 (ERQR…ATST). Residues 49 to 60 (EPPLPEESPAPE) are compositionally biased toward pro residues. Coiled coils occupy residues 122–179 (ETQQ…QKLH) and 280–346 (QQQL…AANV). Residues 294 to 340 (ERQRQQQQEEERQKLEEQQKLEEQEKLRKEKEESAAKEKQQEAETAK) are compositionally biased toward basic and acidic residues.

It belongs to the GLE1 family. In terms of assembly, may associate with the NPC.

It is found in the cytoplasm. The protein localises to the nucleus. It localises to the nuclear pore complex. Its function is as follows. Required for the export of mRNAs containing poly(A) tails from the nucleus into the cytoplasm. May be involved in the terminal step of the mRNA transport through the nuclear pore complex (NPC). The sequence is that of mRNA export factor Gle1 from Drosophila melanogaster (Fruit fly).